Here is a 402-residue protein sequence, read N- to C-terminus: Nicotinate phosphoribosyltransferase (402 aa).

His224 is subject to Phosphohistidine; by autocatalysis.

This sequence belongs to the NAPRTase family. Transiently phosphorylated on a His residue during the reaction cycle. Phosphorylation strongly increases the affinity for substrates and increases the rate of nicotinate D-ribonucleotide production. Dephosphorylation regenerates the low-affinity form of the enzyme, leading to product release.

It carries out the reaction nicotinate + 5-phospho-alpha-D-ribose 1-diphosphate + ATP + H2O = nicotinate beta-D-ribonucleotide + ADP + phosphate + diphosphate. The protein operates within cofactor biosynthesis; NAD(+) biosynthesis; nicotinate D-ribonucleotide from nicotinate: step 1/1. In terms of biological role, catalyzes the synthesis of beta-nicotinate D-ribonucleotide from nicotinate and 5-phospho-D-ribose 1-phosphate at the expense of ATP. The polypeptide is Nicotinate phosphoribosyltransferase (Neisseria meningitidis serogroup B (strain ATCC BAA-335 / MC58)).